A 419-amino-acid polypeptide reads, in one-letter code: Arginine biosynthesis bifunctional protein ArgJ (419 aa).

Positions 154, 180, 191, 277, 414, and 419 each coordinate substrate. Catalysis depends on threonine 191, which acts as the Nucleophile.

This sequence belongs to the ArgJ family. As to quaternary structure, heterotetramer of two alpha and two beta chains.

It localises to the cytoplasm. The catalysed reaction is N(2)-acetyl-L-ornithine + L-glutamate = N-acetyl-L-glutamate + L-ornithine. It catalyses the reaction L-glutamate + acetyl-CoA = N-acetyl-L-glutamate + CoA + H(+). It participates in amino-acid biosynthesis; L-arginine biosynthesis; L-ornithine and N-acetyl-L-glutamate from L-glutamate and N(2)-acetyl-L-ornithine (cyclic): step 1/1. It functions in the pathway amino-acid biosynthesis; L-arginine biosynthesis; N(2)-acetyl-L-ornithine from L-glutamate: step 1/4. Its function is as follows. Catalyzes two activities which are involved in the cyclic version of arginine biosynthesis: the synthesis of N-acetylglutamate from glutamate and acetyl-CoA as the acetyl donor, and of ornithine by transacetylation between N(2)-acetylornithine and glutamate. The sequence is that of Arginine biosynthesis bifunctional protein ArgJ from Thermosynechococcus vestitus (strain NIES-2133 / IAM M-273 / BP-1).